The chain runs to 250 residues: Maleate isomerase (250 aa).

Substrate is bound by residues asparagine 15, 80 to 82, tyrosine 137, and asparagine 167; that span reads CLV. Cysteine 80 serves as the catalytic Nucleophile. The residue at position 80 (cysteine 80) is an S-(2-succinyl)cysteine. Cysteine 198 serves as the catalytic Proton donor. 199–200 contacts substrate; sequence VQ.

The protein belongs to the maleate isomerase family. Homodimer.

The enzyme catalyses maleate = fumarate. It functions in the pathway cofactor degradation; nicotinate degradation. In terms of biological role, catalyzes cis-trans isomerization of the C2-C3 double bond in maleate to yield fumarate in the aerobic nicotinate degradation pathway. This chain is Maleate isomerase, found in Pseudomonas putida (strain ATCC 47054 / DSM 6125 / CFBP 8728 / NCIMB 11950 / KT2440).